Here is a 911-residue protein sequence, read N- to C-terminus: Bifunctional aspartokinase/homoserine dehydrogenase 1, chloroplastic (911 aa).

The N-terminal 82 residues, 1-82, are a transit peptide targeting the chloroplast; it reads MPVVSLAKVV…VENGHLPKGD (82 aa). The tract at residues 83-331 is aspartokinase; the sequence is SWAVHKFGGT…VSEAVVLKTL (249 aa). An interface region spans residues 332 to 557; that stretch reads SYQEAWEMSY…LSRTTLAVGI (226 aa). 2 ACT domains span residues 407 to 482 and 488 to 565; these read VEGT…IIPN and AVGQ…LIGG. The interval 558–911 is homoserine dehydrogenase; sequence IGPGLIGGTL…RLAFYLGAPS (354 aa). Residues Ile-563 and Thr-644 each coordinate NAD(+). NADP(+) is bound by residues Ile-563, Thr-644, and Lys-668. Positions 563, 644, and 668 each coordinate NADPH. Residues Glu-695, Val-698, Ala-700, and Leu-702 each contribute to the Na(+) site. NADP(+)-binding residues include Gly-753 and Glu-756. The L-homoserine site is built by Glu-756 and Asp-767. Lys-771 serves as the catalytic Proton donor. Position 888 (Gly-888) interacts with NAD(+). Gly-888 provides a ligand contact to NADP(+). Gly-888 serves as a coordination point for NADPH.

The protein in the N-terminal section; belongs to the aspartokinase family. This sequence in the C-terminal section; belongs to the homoserine dehydrogenase family. In terms of assembly, homo- or heterodimer. Requires a metal cation as cofactor.

It is found in the plastid. Its subcellular location is the chloroplast. The catalysed reaction is L-homoserine + NADP(+) = L-aspartate 4-semialdehyde + NADPH + H(+). The enzyme catalyses L-homoserine + NAD(+) = L-aspartate 4-semialdehyde + NADH + H(+). It catalyses the reaction L-aspartate + ATP = 4-phospho-L-aspartate + ADP. The protein operates within amino-acid biosynthesis; L-lysine biosynthesis via DAP pathway; (S)-tetrahydrodipicolinate from L-aspartate: step 1/4. It functions in the pathway amino-acid biosynthesis; L-methionine biosynthesis via de novo pathway; L-homoserine from L-aspartate: step 1/3. Its pathway is amino-acid biosynthesis; L-methionine biosynthesis via de novo pathway; L-homoserine from L-aspartate: step 3/3. It participates in amino-acid biosynthesis; L-threonine biosynthesis; L-threonine from L-aspartate: step 1/5. The protein operates within amino-acid biosynthesis; L-threonine biosynthesis; L-threonine from L-aspartate: step 3/5. With respect to regulation, inhibition of aspartate kinase activity by threonine and leucine and 3-fold activation by cysteine, isoleucine, valine, serine and alanine at 2.5 mM. Partial inhibition of homoserine dehydrogenase activity by threonine and cysteine (14% of activity remaining at saturation with either amino acid). No synergy between the effectors for both activation or inhibition. Bifunctional aspartate kinase and homoserine dehydrogenase that catalyzes the first and the third steps toward the synthesis of lysine, methionine and threonine from aspartate. This chain is Bifunctional aspartokinase/homoserine dehydrogenase 1, chloroplastic, found in Arabidopsis thaliana (Mouse-ear cress).